Consider the following 195-residue polypeptide: Ras-related protein rac-2 (195 aa).

10 to 17 (GDGAVGKT) is a GTP binding site. Residues 32–40 (YILTVFDTY) carry the Effector region motif. GTP contacts are provided by residues 57-61 (DTAGQ) and 115-118 (TKAD). The tract at residues 176 to 195 (GLTPPQTPQTRAKKSNCTVL) is disordered. A Cysteine methyl ester modification is found at cysteine 192. Cysteine 192 carries the S-geranylgeranyl cysteine lipid modification. A propeptide spans 193 to 195 (TVL) (removed in mature form).

This sequence belongs to the small GTPase superfamily. Rho family.

It localises to the cell membrane. During gonad morphogenesis, plays a role in distal tip cell (DTC)-mediated guidance of gonad elongation. The chain is Ras-related protein rac-2 (rac-2) from Caenorhabditis elegans.